The sequence spans 177 residues: Large ribosomal subunit protein uL6 (177 aa).

Belongs to the universal ribosomal protein uL6 family. In terms of assembly, part of the 50S ribosomal subunit.

This protein binds to the 23S rRNA, and is important in its secondary structure. It is located near the subunit interface in the base of the L7/L12 stalk, and near the tRNA binding site of the peptidyltransferase center. In Beijerinckia indica subsp. indica (strain ATCC 9039 / DSM 1715 / NCIMB 8712), this protein is Large ribosomal subunit protein uL6.